We begin with the raw amino-acid sequence, 307 residues long: Glycine--tRNA ligase alpha subunit (307 aa).

Belongs to the class-II aminoacyl-tRNA synthetase family. Tetramer of two alpha and two beta subunits.

It localises to the cytoplasm. The catalysed reaction is tRNA(Gly) + glycine + ATP = glycyl-tRNA(Gly) + AMP + diphosphate. This is Glycine--tRNA ligase alpha subunit from Xylella fastidiosa (strain M23).